Reading from the N-terminus, the 577-residue chain is Arginine--tRNA ligase (577 aa).

Residues 132–142 carry the 'HIGH' region motif; the sequence is ANPTGPLHVGH.

The protein belongs to the class-I aminoacyl-tRNA synthetase family. As to quaternary structure, monomer.

The protein localises to the cytoplasm. It catalyses the reaction tRNA(Arg) + L-arginine + ATP = L-arginyl-tRNA(Arg) + AMP + diphosphate. The polypeptide is Arginine--tRNA ligase (Janthinobacterium sp. (strain Marseille) (Minibacterium massiliensis)).